We begin with the raw amino-acid sequence, 436 residues long: Trigger factor (436 aa).

Residues 161-246 (GMRVTMDFIG…LIKVEEQILP (86 aa)) form the PPIase FKBP-type domain.

The protein belongs to the FKBP-type PPIase family. Tig subfamily.

Its subcellular location is the cytoplasm. It catalyses the reaction [protein]-peptidylproline (omega=180) = [protein]-peptidylproline (omega=0). In terms of biological role, involved in protein export. Acts as a chaperone by maintaining the newly synthesized protein in an open conformation. Functions as a peptidyl-prolyl cis-trans isomerase. The polypeptide is Trigger factor (Aeromonas salmonicida (strain A449)).